Consider the following 324-residue polypeptide: Olfactory receptor 8U3 (324 aa).

Over methionine 1–alanine 25 the chain is Extracellular. A helical transmembrane segment spans residues proline 26 to isoleucine 46. Residues threonine 47–arginine 54 lie on the Cytoplasmic side of the membrane. Residues leucine 55–serine 75 traverse the membrane as a helical segment. Topologically, residues alanine 76–threonine 99 are extracellular. A disulfide bridge connects residues cysteine 97 and cysteine 189. A helical membrane pass occupies residues glutamine 100–tyrosine 120. Topologically, residues aspartate 121–arginine 139 are cytoplasmic. The chain crosses the membrane as a helical span at residues valine 140 to threonine 160. Topologically, residues valine 161–glutamate 196 are extracellular. The helical transmembrane segment at isoleucine 197–serine 217 threads the bilayer. Over tyrosine 218–alanine 237 the chain is Cytoplasmic. The chain crosses the membrane as a helical span at residues isoleucine 238 to methionine 258. Over tyrosine 259–aspartate 271 the chain is Extracellular. The N-linked (GlcNAc...) asparagine glycan is linked to asparagine 265. The chain crosses the membrane as a helical span at residues lysine 272 to leucine 292. The Cytoplasmic portion of the chain corresponds to arginine 293–tyrosine 324.

It belongs to the G-protein coupled receptor 1 family.

The protein resides in the cell membrane. Its function is as follows. Odorant receptor. This is Olfactory receptor 8U3 from Homo sapiens (Human).